A 742-amino-acid chain; its full sequence is Enhancer of polycomb-like protein 1 (742 aa).

Residues 1–27 (MPTPSAQLDQGIISSNGGTSGVSASST) show a composition bias toward polar residues. Disordered regions lie at residues 1 to 28 (MPTP…SSTR), 416 to 446 (RQQS…QCQQ), and 718 to 742 (KKLV…HQQA). Residues 724–734 (QRQQQQQQQEQ) show a composition bias toward low complexity.

The protein belongs to the enhancer of polycomb family. As to quaternary structure, component of the NuA4 histone acetyltransferase complex.

It localises to the nucleus. In terms of biological role, component of the NuA4 histone acetyltransferase complex which is involved in transcriptional activation of selected genes principally by acetylation of nucleosomal histone H4 and H2A. The NuA4 complex is also involved in DNA repair. Involved in gene silencing by neighboring heterochromatin, blockage of the silencing spreading along the chromosome, and required for cell cycle progression through G2/M. The polypeptide is Enhancer of polycomb-like protein 1 (EPL1) (Eremothecium gossypii (strain ATCC 10895 / CBS 109.51 / FGSC 9923 / NRRL Y-1056) (Yeast)).